A 281-amino-acid chain; its full sequence is Putative phosphatase/phosphodiesterase MG246 (281 aa).

Residues D11, E42, N43, and N70 each contribute to the Fe cation site. H71 functions as the Proton donor in the catalytic mechanism. Residues H157, H182, and H184 each coordinate Fe cation.

It belongs to the YmdB-like family. The cofactor is Fe(3+).

This Mycoplasma genitalium (strain ATCC 33530 / DSM 19775 / NCTC 10195 / G37) (Mycoplasmoides genitalium) protein is Putative phosphatase/phosphodiesterase MG246.